A 395-amino-acid chain; its full sequence is THAP domain-containing protein 5 (395 aa).

Residues 1–84 (MPRYCAAICC…LKQTAVPTIF (84 aa)) form a THAP-type zinc finger. The interval 85–112 (SLPEDNQGKDPSKKKSQKKNLEDEKEVC) is disordered. Basic and acidic residues predominate over residues 90–112 (NQGKDPSKKKSQKKNLEDEKEVC). An HCFC1-binding motif (HBM) motif is present at residues 321 to 324 (EHSY). The stretch at 348-382 (LELKEQQTLGRLKSLEALIRQLKQENWLSEENVKI) forms a coiled coil.

In terms of assembly, interacts with HTRA2; under apoptotic conditions. Interacts with ABRAXAS2. Cleaved by HTRA2 during apoptosis. Detected in heart. Detected in brain and muscle (at protein level). Highly expressed in the heart. Also found in brain and skeletal muscle.

The protein localises to the nucleus. Has sequence-specific DNA-binding activity and can function as transcriptional repressor (in vitro). May be a regulator of cell cycle: THAP5 overexpression in human cell lines causes cell cycle arrest at G2/M phase. This Homo sapiens (Human) protein is THAP domain-containing protein 5 (THAP5).